Reading from the N-terminus, the 174-residue chain is Nucleoside-triphosphatase THEP1 (174 aa).

Residues 8 to 15 (GIPGIGKS) and 99 to 106 (LIVIDEVG) each bind ATP.

This sequence belongs to the THEP1 NTPase family.

The enzyme catalyses a ribonucleoside 5'-triphosphate + H2O = a ribonucleoside 5'-diphosphate + phosphate + H(+). Its function is as follows. Has nucleotide phosphatase activity towards ATP, GTP, CTP, TTP and UTP. May hydrolyze nucleoside diphosphates with lower efficiency. The protein is Nucleoside-triphosphatase THEP1 of Methanosarcina barkeri (strain Fusaro / DSM 804).